We begin with the raw amino-acid sequence, 97 residues long: Large ribosomal subunit protein uL23 (97 aa).

Belongs to the universal ribosomal protein uL23 family. In terms of assembly, part of the 50S ribosomal subunit. Contacts protein L29, and trigger factor when it is bound to the ribosome.

One of the early assembly proteins it binds 23S rRNA. One of the proteins that surrounds the polypeptide exit tunnel on the outside of the ribosome. Forms the main docking site for trigger factor binding to the ribosome. The polypeptide is Large ribosomal subunit protein uL23 (Anaeromyxobacter dehalogenans (strain 2CP-C)).